The chain runs to 173 residues: Large ribosomal subunit protein uL10 (173 aa).

This sequence belongs to the universal ribosomal protein uL10 family. Part of the ribosomal stalk of the 50S ribosomal subunit. The N-terminus interacts with L11 and the large rRNA to form the base of the stalk. The C-terminus forms an elongated spine to which L12 dimers bind in a sequential fashion forming a multimeric L10(L12)X complex.

In terms of biological role, forms part of the ribosomal stalk, playing a central role in the interaction of the ribosome with GTP-bound translation factors. This is Large ribosomal subunit protein uL10 from Micrococcus luteus (strain ATCC 4698 / DSM 20030 / JCM 1464 / CCM 169 / CCUG 5858 / IAM 1056 / NBRC 3333 / NCIMB 9278 / NCTC 2665 / VKM Ac-2230) (Micrococcus lysodeikticus).